Here is an 89-residue protein sequence, read N- to C-terminus: Large ribosomal subunit protein bL27 (89 aa).

The interval 1–21 (MAHKKAGGSSRNGRDSKGKRL) is disordered.

It belongs to the bacterial ribosomal protein bL27 family.

This chain is Large ribosomal subunit protein bL27, found in Bradyrhizobium sp. (strain BTAi1 / ATCC BAA-1182).